The chain runs to 1197 residues: Sensor protein EvgS (1197 aa).

The N-terminal stretch at 1–21 is a signal peptide; that stretch reads MKFLPYIFLLCCGLWSTISFA. Residues 22 to 325 are Cytoplasmic-facing; it reads DEDYIEYRGI…SMTDENGSVR (304 aa). The chain crosses the membrane as a helical span at residues 326-346; the sequence is GVMGDILNIITLQTGLNFSPI. Over 347–537 the chain is Periplasmic; the sequence is TVSHNIHAGT…TWDLYSEQFY (191 aa). The helical transmembrane segment at 538–558 threads the bilayer; it reads IVTTLSVLLVGSSLLWGFYLL. The Cytoplasmic portion of the chain corresponds to 559 to 1197; the sequence is RSVRRRKVIQ…EIAVFCQKND (639 aa). Residues 718 to 938 form the Histidine kinase domain; that stretch reads TMSHEIRTPI…TFTITIPVEI (221 aa). The residue at position 721 (His721) is a Phosphohistidine; by autocatalysis. Positions 960–1074 constitute a Response regulatory domain; sequence SILIADDHPT…VLKTHLSQLH (115 aa). The residue at position 1009 (Asp1009) is a 4-aspartylphosphate. Residues 1098–1197 form the HPt domain; sequence DLQLMQEILM…EIAVFCQKND (100 aa). His1137 carries the phosphohistidine modification.

In terms of processing, activation requires a sequential transfer of a phosphate group from a His in the primary transmitter domain, to an Asp in the receiver domain and to a His in the secondary transmitter domain.

It is found in the cell inner membrane. The enzyme catalyses ATP + protein L-histidine = ADP + protein N-phospho-L-histidine.. Its function is as follows. Member of the two-component regulatory system EvgS/EvgA. Phosphorylates EvgA via a four-step phosphorelay in response to environmental signals. The protein is Sensor protein EvgS (evgS) of Escherichia coli (strain K12).